Here is a 94-residue protein sequence, read N- to C-terminus: Integration host factor subunit beta (94 aa).

Belongs to the bacterial histone-like protein family. Heterodimer of an alpha and a beta chain.

Functionally, this protein is one of the two subunits of integration host factor, a specific DNA-binding protein that functions in genetic recombination as well as in transcriptional and translational control. This chain is Integration host factor subunit beta, found in Haemophilus influenzae (strain 86-028NP).